The sequence spans 726 residues: Catalase-peroxidase (726 aa).

The tryptophyl-tyrosyl-methioninium (Trp-Tyr) (with M-252) cross-link spans 98 to 226 (WHSAGTYRMQ…LAAVHMGLIY (129 aa)). His-99 functions as the Proton acceptor in the catalytic mechanism. Residues 226–252 (YVNPEGVNGQPDPARTAQHVRETFARM) constitute a cross-link (tryptophyl-tyrosyl-methioninium (Tyr-Met) (with W-98)). His-267 lines the heme b pocket.

This sequence belongs to the peroxidase family. Peroxidase/catalase subfamily. As to quaternary structure, homodimer or homotetramer. Heme b serves as cofactor. Formation of the three residue Trp-Tyr-Met cross-link is important for the catalase, but not the peroxidase activity of the enzyme.

It carries out the reaction H2O2 + AH2 = A + 2 H2O. The enzyme catalyses 2 H2O2 = O2 + 2 H2O. Bifunctional enzyme with both catalase and broad-spectrum peroxidase activity. The protein is Catalase-peroxidase of Roseobacter denitrificans (strain ATCC 33942 / OCh 114) (Erythrobacter sp. (strain OCh 114)).